Consider the following 162-residue polypeptide: Cytochrome B pre-mRNA-processing protein 6 (162 aa).

Ser2 bears the N-acetylserine mark. Thr97 carries the phosphothreonine modification.

The protein resides in the mitochondrion. Functionally, this protein is involved in processing of the 5' terminus and the intervening sequences of cytochrome b pre-mRNA. The polypeptide is Cytochrome B pre-mRNA-processing protein 6 (CBP6) (Saccharomyces cerevisiae (strain ATCC 204508 / S288c) (Baker's yeast)).